The primary structure comprises 267 residues: Tryptophan synthase alpha chain (267 aa).

Catalysis depends on proton acceptor residues E47 and D58.

The protein belongs to the TrpA family. Tetramer of two alpha and two beta chains.

It catalyses the reaction (1S,2R)-1-C-(indol-3-yl)glycerol 3-phosphate + L-serine = D-glyceraldehyde 3-phosphate + L-tryptophan + H2O. The protein operates within amino-acid biosynthesis; L-tryptophan biosynthesis; L-tryptophan from chorismate: step 5/5. Its function is as follows. The alpha subunit is responsible for the aldol cleavage of indoleglycerol phosphate to indole and glyceraldehyde 3-phosphate. In Chlorobaculum tepidum (strain ATCC 49652 / DSM 12025 / NBRC 103806 / TLS) (Chlorobium tepidum), this protein is Tryptophan synthase alpha chain.